The following is a 595-amino-acid chain: Aspartate--tRNA(Asp/Asn) ligase (595 aa).

L-aspartate is bound at residue glutamate 175. Residues 199–202 (QQYK) form an aspartate region. Arginine 221 and histidine 454 together coordinate L-aspartate. 221–223 (RDE) provides a ligand contact to ATP. ATP is bound at residue glutamate 488. Arginine 495 contributes to the L-aspartate binding site. An ATP-binding site is contributed by 540–543 (GIDR).

This sequence belongs to the class-II aminoacyl-tRNA synthetase family. Type 1 subfamily. As to quaternary structure, homodimer.

The protein resides in the cytoplasm. It catalyses the reaction tRNA(Asx) + L-aspartate + ATP = L-aspartyl-tRNA(Asx) + AMP + diphosphate. Functionally, aspartyl-tRNA synthetase with relaxed tRNA specificity since it is able to aspartylate not only its cognate tRNA(Asp) but also tRNA(Asn). Reaction proceeds in two steps: L-aspartate is first activated by ATP to form Asp-AMP and then transferred to the acceptor end of tRNA(Asp/Asn). The polypeptide is Aspartate--tRNA(Asp/Asn) ligase (Brucella abortus (strain S19)).